A 697-amino-acid polypeptide reads, in one-letter code: tRNA 5-methylaminomethyl-2-thiouridine biosynthesis bifunctional protein MnmC (697 aa).

A tRNA (mnm(5)s(2)U34)-methyltransferase region spans residues 1-275 (MTAKPHKSCQ…KPATLAAIDH (275 aa)). An FAD-dependent cmnm(5)s(2)U34 oxidoreductase region spans residues 280–697 (VGGGLASANL…LRKLLKGKAL (418 aa)).

It in the N-terminal section; belongs to the methyltransferase superfamily. tRNA (mnm(5)s(2)U34)-methyltransferase family. In the C-terminal section; belongs to the DAO family. FAD is required as a cofactor.

It is found in the cytoplasm. The catalysed reaction is 5-aminomethyl-2-thiouridine(34) in tRNA + S-adenosyl-L-methionine = 5-methylaminomethyl-2-thiouridine(34) in tRNA + S-adenosyl-L-homocysteine + H(+). Its function is as follows. Catalyzes the last two steps in the biosynthesis of 5-methylaminomethyl-2-thiouridine (mnm(5)s(2)U) at the wobble position (U34) in tRNA. Catalyzes the FAD-dependent demodification of cmnm(5)s(2)U34 to nm(5)s(2)U34, followed by the transfer of a methyl group from S-adenosyl-L-methionine to nm(5)s(2)U34, to form mnm(5)s(2)U34. This chain is tRNA 5-methylaminomethyl-2-thiouridine biosynthesis bifunctional protein MnmC, found in Shewanella sp. (strain ANA-3).